Reading from the N-terminus, the 367-residue chain is Protein trichome birefringence-like 39 (367 aa).

A helical; Signal-anchor for type II membrane protein membrane pass occupies residues 7–29; sequence GNPSFLFFFFFFLCLSTVSAYIN. The GDS motif signature appears at 120–122; it reads GDS. The DCXHWCLPGXXDXWN motif signature appears at 343 to 357; it reads DCSHWCLPGLPDTWN.

The protein belongs to the PC-esterase family. TBL subfamily.

It localises to the membrane. Its function is as follows. May act as a bridging protein that binds pectin and other cell wall polysaccharides. Probably involved in maintaining esterification of pectins. May be involved in the specific O-acetylation of cell wall polymers. The sequence is that of Protein trichome birefringence-like 39 (TBL39) from Arabidopsis thaliana (Mouse-ear cress).